Reading from the N-terminus, the 333-residue chain is T-cell surface glycoprotein CD1b1 (333 aa).

Residues 1 to 17 form the signal peptide; that stretch reads MLLVALALLAFLFPAGD. Over 18–302 the chain is Extracellular; sequence TQNALQWPTS…LYWGHSISIG (285 aa). N-linked (GlcNAc...) asparagine glycans are attached at residues Asn-38, Asn-75, and Asn-146. 3 disulfides stabilise this stretch: Cys-120-Cys-184, Cys-149-Cys-163, and Cys-224-Cys-279. Residues 197 to 295 enclose the Ig-like domain; the sequence is PDIQKQVKPD…LEGQDIILYW (99 aa). A helical membrane pass occupies residues 303 to 323; sequence WIILAVLVPCLIVLVLFVLWF. The Cytoplasmic portion of the chain corresponds to 324–333; that stretch reads YRRWSYEDIL. Positions 329–332 match the Internalization signal motif; it reads YEDI.

Heterodimer with B2M (beta-2-microglobulin). Interacts with saposin C.

Its subcellular location is the cell membrane. It localises to the endosome membrane. The protein localises to the lysosome membrane. In terms of biological role, antigen-presenting protein that binds self and non-self lipid and glycolipid antigens and presents them to T-cell receptors on natural killer T-cells. The polypeptide is T-cell surface glycoprotein CD1b1 (CD1B1) (Cavia porcellus (Guinea pig)).